The sequence spans 244 residues: Probable transcriptional regulatory protein Dgeo_2194 (244 aa).

The disordered stretch occupies residues 1–21 (MAGHSKWAQIKRKKGANDKKR).

Belongs to the TACO1 family.

The protein resides in the cytoplasm. The protein is Probable transcriptional regulatory protein Dgeo_2194 of Deinococcus geothermalis (strain DSM 11300 / CIP 105573 / AG-3a).